A 320-amino-acid polypeptide reads, in one-letter code: Lipoyl synthase (320 aa).

[4Fe-4S] cluster-binding residues include Cys-67, Cys-72, Cys-78, Cys-93, Cys-97, Cys-100, and Ser-307. In terms of domain architecture, Radical SAM core spans 79-296; it reads FNHGTATFMI…RDKAEKMGFE (218 aa).

It belongs to the radical SAM superfamily. Lipoyl synthase family. The cofactor is [4Fe-4S] cluster.

It is found in the cytoplasm. It catalyses the reaction [[Fe-S] cluster scaffold protein carrying a second [4Fe-4S](2+) cluster] + N(6)-octanoyl-L-lysyl-[protein] + 2 oxidized [2Fe-2S]-[ferredoxin] + 2 S-adenosyl-L-methionine + 4 H(+) = [[Fe-S] cluster scaffold protein] + N(6)-[(R)-dihydrolipoyl]-L-lysyl-[protein] + 4 Fe(3+) + 2 hydrogen sulfide + 2 5'-deoxyadenosine + 2 L-methionine + 2 reduced [2Fe-2S]-[ferredoxin]. The protein operates within protein modification; protein lipoylation via endogenous pathway; protein N(6)-(lipoyl)lysine from octanoyl-[acyl-carrier-protein]: step 2/2. In terms of biological role, catalyzes the radical-mediated insertion of two sulfur atoms into the C-6 and C-8 positions of the octanoyl moiety bound to the lipoyl domains of lipoate-dependent enzymes, thereby converting the octanoylated domains into lipoylated derivatives. This chain is Lipoyl synthase, found in Histophilus somni (strain 129Pt) (Haemophilus somnus).